The chain runs to 1801 residues: Protein mono-ADP-ribosyltransferase PARP14 (1801 aa).

Ser33 is subject to Phosphoserine. The disordered stretch occupies residues 109–132; sequence SKTKEDVKEPDVSEELDTKLPLDG. Macro domains follow at residues 791-978, 1003-1190, and 1216-1387; these read KCFS…KTVF, WEKG…ARRA, and DSGV…KKRE. Residues Asn824, Leu833, 922-926, Asp961, 1023-1024, Ser1034, 1046-1049, 1133-1137, 1175-1178, 1235-1236, Ser1247, Val1258, 1332-1336, and Phe1371 each bind a glycoprotein; these read SSGVF, VQ, LSKS, GTGNL, DHEN, DI, and GTGNA. Ser1403 and Ser1411 each carry phosphoserine. A WWE domain is found at 1523-1601; sequence EQESRADCIS…SLSVQRLTKS (79 aa). The PARP catalytic domain occupies 1605 to 1801; sequence IPAHWSDMKQ…YPEYLITFRK (197 aa).

Belongs to the ARTD/PARP family. In terms of assembly, interacts with STAT6. Interacts with PARP10. Interacts with PARP9 in IFNG-stimulated macrophages; the interaction prevents PARP14-mediated STAT1 and STAT6 ADP-riboslylation. Auto-ADP-ribosylated. Expressed in macrophages.

The protein localises to the nucleus. It localises to the cytoplasm. The enzyme catalyses L-glutamyl-[protein] + NAD(+) = 5-O-(ADP-D-ribosyl)-L-glutamyl-[protein] + nicotinamide. In terms of biological role, ADP-ribosyltransferase that mediates mono-ADP-ribosylation of glutamate residues on target proteins. In contrast to PARP1 and PARP2, it is not able to mediate poly-ADP-ribosylation. Has been shown to catalyze the mono-ADP-ribosylation of STAT1 at 'Glu-657' and 'Glu-705', thus decreasing STAT1 phosphorylation which negatively regulates pro-inflammatory cytokine production in macrophages in response to IFNG stimulation. However, the role of ADP-ribosylation in the prevention of STAT1 phosphorylation has been called into question and it has been suggested that the inhibition of phosphorylation may be the result of sumoylation of STAT1 'Lys-703'. Mono-ADP-ribosylates STAT6; enhancing STAT6-dependent transcription. In macrophages, positively regulates MRC1 expression in response to IL4 stimulation by promoting STAT6 phosphorylation. Mono-ADP-ribosylates PARP9. The protein is Protein mono-ADP-ribosyltransferase PARP14 of Homo sapiens (Human).